Here is a 342-residue protein sequence, read N- to C-terminus: Trace amine-associated receptor 8 (342 aa).

Residues 1–31 are Extracellular-facing; it reads MTSNFSQPVVQLCYEDVNGSCIETPYSPGSR. N-linked (GlcNAc...) asparagine glycans are attached at residues Asn-4 and Asn-18. 2 cysteine pairs are disulfide-bonded: Cys-21/Cys-185 and Cys-104/Cys-189. A helical transmembrane segment spans residues 32–52; the sequence is VILYTAFSFGSLLAVFGNLLV. Residues 53–67 are Cytoplasmic-facing; the sequence is MTSVLHFKQLHSPTN. Residues 68–88 traverse the membrane as a helical segment; it reads FLIASLACADFLVGVTVMLFS. The Extracellular segment spans residues 89 to 111; the sequence is MVRTVESCWYFGAKFCTLHSCCD. A helical membrane pass occupies residues 112 to 132; sequence VAFCYSSVLHLCFICIDRYIV. Over 133–146 the chain is Cytoplasmic; the sequence is VTDPLVYATKFTVS. A helical membrane pass occupies residues 147–167; the sequence is VSGICISVSWILPLTYSGAVF. Residues 168-195 lie on the Extracellular side of the membrane; sequence YTGVNDDGLEELVSALNCVGGCQIIVSQ. The chain crosses the membrane as a helical span at residues 196 to 216; the sequence is GWVLIDFLLFFIPTLVMIILY. The Cytoplasmic portion of the chain corresponds to 217–258; sequence SKIFLIAKQQAIKIETTSSKVESSSESYKIRVAKRERKAAKT. The helical transmembrane segment at 259–279 threads the bilayer; that stretch reads LGVTVLAFVISWLPYTVDILI. Asp-280 is a topological domain (extracellular). The helical transmembrane segment at 281-301 threads the bilayer; it reads AFMGFLTPAYIYEICCWSAYY. Over 302–342 the chain is Cytoplasmic; that stretch reads NSAMNPLIYALFYPWFRKAIKLILSGDVLKASSSTISLFLE.

The protein belongs to the G-protein coupled receptor 1 family. Expressed in kidney and amygdala. Not expressed in other tissues or brain regions tested.

The protein resides in the cell membrane. In terms of biological role, olfactory receptor specific for trace amines. Trace amine compounds are enriched in animal body fluids and act on trace amine-associated receptors (TAARs) to elicit both intraspecific and interspecific innate behaviors. Ligand-binding causes a conformation change that triggers signaling via G alpha proteins, possibly G(i)/G(o) G alpha proteins. In Homo sapiens (Human), this protein is Trace amine-associated receptor 8 (TAAR8).